A 645-amino-acid polypeptide reads, in one-letter code: DNA ligase (645 aa).

NAD(+) is bound by residues 30 to 34 (DAEFD) and 72 to 73 (SQ). Catalysis depends on K99, which acts as the N6-AMP-lysine intermediate. R120, E163, K275, and K296 together coordinate NAD(+). Residues C387, C390, C403, and C408 each contribute to the Zn(2+) site. The region spanning 564–645 (EEGAVLKGLS…EAFLNLIGKV (82 aa)) is the BRCT domain.

The protein belongs to the NAD-dependent DNA ligase family. LigA subfamily. It depends on Mg(2+) as a cofactor. The cofactor is Mn(2+).

It carries out the reaction NAD(+) + (deoxyribonucleotide)n-3'-hydroxyl + 5'-phospho-(deoxyribonucleotide)m = (deoxyribonucleotide)n+m + AMP + beta-nicotinamide D-nucleotide.. Its function is as follows. DNA ligase that catalyzes the formation of phosphodiester linkages between 5'-phosphoryl and 3'-hydroxyl groups in double-stranded DNA using NAD as a coenzyme and as the energy source for the reaction. It is essential for DNA replication and repair of damaged DNA. The chain is DNA ligase from Treponema denticola (strain ATCC 35405 / DSM 14222 / CIP 103919 / JCM 8153 / KCTC 15104).